Consider the following 252-residue polypeptide: Chitooligosaccharide deacetylase (252 aa).

Mg(2+) contacts are provided by H61 and H125.

This sequence belongs to the YdjC deacetylase family. ChbG subfamily. In terms of assembly, homodimer. The cofactor is Mg(2+).

It localises to the cytoplasm. The catalysed reaction is N,N'-diacetylchitobiose + H2O = N-acetyl-beta-D-glucosaminyl-(1-&gt;4)-D-glucosamine + acetate. It carries out the reaction diacetylchitobiose-6'-phosphate + H2O = N'-monoacetylchitobiose-6'-phosphate + acetate. It functions in the pathway glycan degradation; chitin degradation. Functionally, involved in the degradation of chitin. ChbG is essential for growth on the acetylated chitooligosaccharides chitobiose and chitotriose but is dispensable for growth on cellobiose and chitosan dimer, the deacetylated form of chitobiose. Deacetylation of chitobiose-6-P and chitotriose-6-P is necessary for both the activation of the chb promoter by the regulatory protein ChbR and the hydrolysis of phosphorylated beta-glucosides by the phospho-beta-glucosidase ChbF. Catalyzes the removal of only one acetyl group from chitobiose-6-P to yield monoacetylchitobiose-6-P, the inducer of ChbR and the substrate of ChbF. The sequence is that of Chitooligosaccharide deacetylase from Salmonella newport (strain SL254).